A 190-amino-acid polypeptide reads, in one-letter code: Large ribosomal subunit protein eL15 (190 aa).

It belongs to the eukaryotic ribosomal protein eL15 family.

The chain is Large ribosomal subunit protein eL15 (rpl15e) from Nanoarchaeum equitans (strain Kin4-M).